Reading from the N-terminus, the 335-residue chain is Ornithine carbamoyltransferase (335 aa).

Carbamoyl phosphate-binding positions include 56–59 (STRT), glutamine 83, arginine 107, and 134–137 (HPTQ). Residues asparagine 168, aspartate 232, and 236 to 237 (SM) contribute to the L-ornithine site. Carbamoyl phosphate contacts are provided by residues 274-275 (CL) and arginine 320.

The protein belongs to the aspartate/ornithine carbamoyltransferase superfamily. OTCase family.

The protein localises to the cytoplasm. It carries out the reaction carbamoyl phosphate + L-ornithine = L-citrulline + phosphate + H(+). The protein operates within amino-acid biosynthesis; L-arginine biosynthesis; L-arginine from L-ornithine and carbamoyl phosphate: step 1/3. Functionally, reversibly catalyzes the transfer of the carbamoyl group from carbamoyl phosphate (CP) to the N(epsilon) atom of ornithine (ORN) to produce L-citrulline. The sequence is that of Ornithine carbamoyltransferase from Yersinia pseudotuberculosis serotype I (strain IP32953).